The sequence spans 162 residues: ATP synthase subunit b (162 aa).

The chain crosses the membrane as a helical span at residues 6 to 25 (TLFTLVTFLVLMLAVGKVAW).

Belongs to the ATPase B chain family. In terms of assembly, F-type ATPases have 2 components, F(1) - the catalytic core - and F(0) - the membrane proton channel. F(1) has five subunits: alpha(3), beta(3), gamma(1), delta(1), epsilon(1). F(0) has three main subunits: a(1), b(2) and c(10-14). The alpha and beta chains form an alternating ring which encloses part of the gamma chain. F(1) is attached to F(0) by a central stalk formed by the gamma and epsilon chains, while a peripheral stalk is formed by the delta and b chains.

It localises to the cell membrane. Its function is as follows. F(1)F(0) ATP synthase produces ATP from ADP in the presence of a proton or sodium gradient. F-type ATPases consist of two structural domains, F(1) containing the extramembraneous catalytic core and F(0) containing the membrane proton channel, linked together by a central stalk and a peripheral stalk. During catalysis, ATP synthesis in the catalytic domain of F(1) is coupled via a rotary mechanism of the central stalk subunits to proton translocation. Functionally, component of the F(0) channel, it forms part of the peripheral stalk, linking F(1) to F(0). The chain is ATP synthase subunit b from Lacticaseibacillus paracasei (strain ATCC 334 / BCRC 17002 / CCUG 31169 / CIP 107868 / KCTC 3260 / NRRL B-441) (Lactobacillus paracasei).